The following is a 137-amino-acid chain: Nucleoside diphosphate kinase (137 aa).

K10, F58, R86, T92, R103, and N113 together coordinate ATP. H116 functions as the Pros-phosphohistidine intermediate in the catalytic mechanism.

It belongs to the NDK family. Homotetramer. Mg(2+) is required as a cofactor.

Its subcellular location is the cytoplasm. It catalyses the reaction a 2'-deoxyribonucleoside 5'-diphosphate + ATP = a 2'-deoxyribonucleoside 5'-triphosphate + ADP. It carries out the reaction a ribonucleoside 5'-diphosphate + ATP = a ribonucleoside 5'-triphosphate + ADP. Major role in the synthesis of nucleoside triphosphates other than ATP. The ATP gamma phosphate is transferred to the NDP beta phosphate via a ping-pong mechanism, using a phosphorylated active-site intermediate. The sequence is that of Nucleoside diphosphate kinase from Helicobacter pylori (strain P12).